The primary structure comprises 476 residues: Adenosylhomocysteinase (476 aa).

Residues Thr-67, Asp-142, and Glu-202 each contribute to the substrate site. Residue 203 to 205 participates in NAD(+) binding; it reads TTT. Lys-232 and Asp-236 together coordinate substrate. NAD(+)-binding positions include Asn-237, 266 to 271, Glu-289, Asn-324, 345 to 347, and Asn-390; these read GYGDVG and IGH.

Belongs to the adenosylhomocysteinase family. It depends on NAD(+) as a cofactor.

Its subcellular location is the cytoplasm. The catalysed reaction is S-adenosyl-L-homocysteine + H2O = L-homocysteine + adenosine. The protein operates within amino-acid biosynthesis; L-homocysteine biosynthesis; L-homocysteine from S-adenosyl-L-homocysteine: step 1/1. In terms of biological role, may play a key role in the regulation of the intracellular concentration of adenosylhomocysteine. The protein is Adenosylhomocysteinase of Prochlorococcus marinus (strain MIT 9303).